Reading from the N-terminus, the 330-residue chain is tRNA U34 carboxymethyltransferase (330 aa).

Carboxy-S-adenosyl-L-methionine contacts are provided by residues K91, W105, K110, G130, 152–154 (DPS), 181–182 (IE), M196, Y200, and R315.

Belongs to the class I-like SAM-binding methyltransferase superfamily. CmoB family. In terms of assembly, homotetramer.

It carries out the reaction carboxy-S-adenosyl-L-methionine + 5-hydroxyuridine(34) in tRNA = 5-carboxymethoxyuridine(34) in tRNA + S-adenosyl-L-homocysteine + H(+). Catalyzes carboxymethyl transfer from carboxy-S-adenosyl-L-methionine (Cx-SAM) to 5-hydroxyuridine (ho5U) to form 5-carboxymethoxyuridine (cmo5U) at position 34 in tRNAs. The sequence is that of tRNA U34 carboxymethyltransferase from Shewanella denitrificans (strain OS217 / ATCC BAA-1090 / DSM 15013).